The primary structure comprises 223 residues: UPF0441 protein YgiB (223 aa).

Residues Thr-178–Thr-195 are compositionally biased toward low complexity. A disordered region spans residues Thr-178–Gly-223. The segment covering Ala-204–Gly-223 has biased composition (polar residues).

The protein belongs to the UPF0441 family.

The sequence is that of UPF0441 protein YgiB from Salmonella enteritidis PT4 (strain P125109).